A 160-amino-acid chain; its full sequence is Transcription antitermination protein NusB (160 aa).

It belongs to the NusB family.

Functionally, involved in transcription antitermination. Required for transcription of ribosomal RNA (rRNA) genes. Binds specifically to the boxA antiterminator sequence of the ribosomal RNA (rrn) operons. The protein is Transcription antitermination protein NusB of Rhizobium etli (strain CIAT 652).